The following is a 403-amino-acid chain: GPI-N-acetylgalactosamine transferase PGAP4 (403 aa).

Over 1–22 (MTTSTSPAAMLLRRLRRLSWGS) the chain is Cytoplasmic. The helical transmembrane segment at 23–43 (TAVQLFILTVVTFGLLAPLAC) threads the bilayer. The Lumenal segment spans residues 44-264 (HRLLHSYFYL…INPEPMRILE (221 aa)). Valine 109 serves as a coordination point for UDP-N-acetyl-alpha-D-galactosamine. 2 disulfide bridges follow: cysteine 132/cysteine 136 and cysteine 144/cysteine 194. Positions 211-213 (EDD) match the DXD motif motif. The chain crosses the membrane as a helical span at residues 265 to 285 (WVGVGMLLGPVLTWIYMRFAC). Residues 286 to 287 (RP) are Cytoplasmic-facing. Residues 288-308 (GFSWPVMLFFCLYSMGLVELV) form a helical membrane-spanning segment. Residues 309–403 (GRHYFLELRR…LRYNFHPSLL (95 aa)) lie on the Lumenal side of the membrane. The cysteines at positions 332 and 333 are disulfide-linked. Threonine 334, proline 335, and lysine 362 together coordinate UDP-N-acetyl-alpha-D-galactosamine.

It belongs to the PGAP4 family. Post-translationally, glycosylated.

The protein resides in the golgi apparatus membrane. Golgi-resident glycosylphosphatidylinositol (GPI)-N-acetylgalactosamine transferase that catalyzes the N-acetyl-beta-D-galactosamine transfer from an UDP-N-acetyl-alpha-D-galactosamine to the 4-OH-position of first mannose of the glycosylphosphatidylinositol (GPI) of a GPI-anchored protein (GPI-AP). This modification occurs after the fatty acid remodeling step of the GPI-anchor maturation. This chain is GPI-N-acetylgalactosamine transferase PGAP4, found in Mus musculus (Mouse).